The primary structure comprises 144 residues: Large ribosomal subunit protein uL15 (144 aa).

Positions M1–R48 are disordered.

It belongs to the universal ribosomal protein uL15 family. In terms of assembly, part of the 50S ribosomal subunit.

In terms of biological role, binds to the 23S rRNA. The chain is Large ribosomal subunit protein uL15 from Chlamydia caviae (strain ATCC VR-813 / DSM 19441 / 03DC25 / GPIC) (Chlamydophila caviae).